A 1100-amino-acid chain; its full sequence is Exportin-T (1100 aa).

The protein belongs to the exportin family. As to quaternary structure, interacts with GSP1, GSP2, NSP1, NUP2 and UTP8.

It localises to the nucleus. It is found in the cytoplasm. TRNA nucleus export receptor which facilitates tRNA translocation across the nuclear pore complex. Preferentially interacts with tRNAs with mature 5'- and 3'-termini and does not distinguish between intron-containing and spliced tRNAs. In the nucleus binds to tRNA and to the Ran-GTPases GSP1 or GSP2 in their active GTP-bound form. Docking of this trimeric complex to the nuclear pore complex (NPC) is mediated through binding to nucleoporins. Upon transit of a nuclear export complex into the cytoplasm, disassembling of the complex and hydrolysis of Ran-GTP to Ran-GDP cause release of the tRNA from the export receptor. The directionality of nuclear export is thought to be conferred by an asymmetric distribution of the GTP- and GDP-bound forms of Ran between the cytoplasm and nucleus. Involved in pre-tRNA splicing, probably by affecting the interaction of pre-tRNA with splicing endonuclease. In Saccharomyces cerevisiae (strain YJM789) (Baker's yeast), this protein is Exportin-T (LOS1).